A 150-amino-acid polypeptide reads, in one-letter code: Large ribosomal subunit protein bL9 (150 aa).

The protein belongs to the bacterial ribosomal protein bL9 family.

Its function is as follows. Binds to the 23S rRNA. The sequence is that of Large ribosomal subunit protein bL9 from Neisseria meningitidis serogroup A / serotype 4A (strain DSM 15465 / Z2491).